Here is a 635-residue protein sequence, read N- to C-terminus: Cerevisin (635 aa).

The signal sequence occupies residues 1–19; that stretch reads MKLENTLFTLGALGSISAA. Residues 20-280 constitute a propeptide that is removed on maturation; sequence LVIPNLENAA…VERDSIVEAT (261 aa). Composition is skewed to basic and acidic residues over residues 35 to 50, 74 to 85, 94 to 109, and 126 to 136; these read INKE…VEFT, KGQDKESPEFNG, SAHE…HESS, and GCHENKVEEKK. The segment at 35 to 155 is disordered; that stretch reads INKEDHHERP…KHHEKTLEKG (121 aa). Residues 137 to 155 show a composition bias toward basic residues; sequence MKGKKVKGKKHHEKTLEKG. One can recognise an Inhibitor I9 domain in the interval 182–278; it reads RYIIVFKRGA…DFVERDSIVE (97 aa). A Peptidase S8 domain is found at 289 to 614; sequence PWGLARISHR…KQELNMDEFI (326 aa). Residues Asp325 and His357 each act as charge relay system in the active site. A disulfide bond links Cys460 and Cys491. The Charge relay system role is filled by Ser519. Residues 575-635 constitute a propeptide that is removed on maturation; the sequence is DTPNVLIYNG…RDILDKLNII (61 aa). An N-linked (GlcNAc...) asparagine glycan is attached at Asn594.

This sequence belongs to the peptidase S8 family. In terms of processing, activated by N- and C-terminal proteolytic cleavage. Protease B (PrB/PRB1) processing requires at least 4 cleavages. First, the signal peptide is removed from the 76 kDa preproprotease B by signal peptidase in the ER. Then, PrB removes its own Pro-region (in trans) at the N-terminus, producing a 39 kDa form before exiting the ER. In the Golgi complex, the C-terminal Post-region of the 40 kDa proprotease B undergoes protease A (PrA/PEP4)-mediated processing to a 37 kDa intermediate, which in turn is quickly processed again by PrB in trans to yield the 31 kDa mature PrB. Glycosylated. Preproprotease B is a 76 kDa unglycosylated precursor that enters the endoplasmic reticulum (ER), where it receives one Asn-linked and an undetermined number of non-Asn-linked carbohydrate side chains. In the Golgi complex, the 39 kDa form becomes 40 kDa, due to elaboration of the Asn-linked side chain. The ultimate processing step removes a peptide containing the Asn-linked chain. Mature PrB has only non-Asn-linked carbohydrates.

It is found in the vacuole. The catalysed reaction is Hydrolysis of proteins with broad specificity, and of Bz-Arg-OEt &gt; Ac-Tyr-OEt. Does not hydrolyze peptide amides.. Functionally, vacuolar proteinase B involved in protein degradation in the vacuole. Among other substrates, acts on carboxypeptidase Y (cpY/PRC1) to activate it by processing its Pro-peptide. Required for meiosis and spore formation, and for optimal survival in stationary phase. This is Cerevisin (PRB1) from Saccharomyces cerevisiae (strain ATCC 204508 / S288c) (Baker's yeast).